The primary structure comprises 288 residues: ATP synthase gamma chain (288 aa).

Belongs to the ATPase gamma chain family. As to quaternary structure, F-type ATPases have 2 components, CF(1) - the catalytic core - and CF(0) - the membrane proton channel. CF(1) has five subunits: alpha(3), beta(3), gamma(1), delta(1), epsilon(1). CF(0) has three main subunits: a, b and c.

It is found in the cell inner membrane. Its function is as follows. Produces ATP from ADP in the presence of a proton gradient across the membrane. The gamma chain is believed to be important in regulating ATPase activity and the flow of protons through the CF(0) complex. This Glaesserella parasuis serovar 5 (strain SH0165) (Haemophilus parasuis) protein is ATP synthase gamma chain.